The following is a 158-amino-acid chain: Endoribonuclease YbeY (158 aa).

His-121, His-125, and His-131 together coordinate Zn(2+).

This sequence belongs to the endoribonuclease YbeY family. It depends on Zn(2+) as a cofactor.

Its subcellular location is the cytoplasm. Functionally, single strand-specific metallo-endoribonuclease involved in late-stage 70S ribosome quality control and in maturation of the 3' terminus of the 16S rRNA. The sequence is that of Endoribonuclease YbeY from Exiguobacterium sibiricum (strain DSM 17290 / CCUG 55495 / CIP 109462 / JCM 13490 / 255-15).